Reading from the N-terminus, the 427-residue chain is Glutamate-1-semialdehyde 2,1-aminomutase 2 (427 aa).

Lysine 267 is modified (N6-(pyridoxal phosphate)lysine).

This sequence belongs to the class-III pyridoxal-phosphate-dependent aminotransferase family. HemL subfamily. Homodimer. Requires pyridoxal 5'-phosphate as cofactor.

The protein resides in the cytoplasm. The enzyme catalyses (S)-4-amino-5-oxopentanoate = 5-aminolevulinate. The protein operates within porphyrin-containing compound metabolism; protoporphyrin-IX biosynthesis; 5-aminolevulinate from L-glutamyl-tRNA(Glu): step 2/2. The sequence is that of Glutamate-1-semialdehyde 2,1-aminomutase 2 from Staphylococcus haemolyticus (strain JCSC1435).